A 344-amino-acid chain; its full sequence is L-rhamnose-proton symporter (344 aa).

10 helical membrane passes run 4–24 (AITM…CFYA), 38–58 (WSVG…ALLL), 68–88 (FSLS…IGNI), 101–121 (MGIG…TPII), 137–157 (TLLG…AGQL), 175–195 (LVLA…MNAA), 214–234 (LPSY…FCFI), 259–279 (VLLS…YAWG), 290–310 (ISWM…GLVL), and 323–343 (VLSL…IGMA).

The protein belongs to the L-rhamnose transporter (TC 2.A.7.6) family.

The protein localises to the cell inner membrane. It carries out the reaction L-rhamnopyranose(in) + H(+)(in) = L-rhamnopyranose(out) + H(+)(out). Functionally, uptake of L-rhamnose across the cytoplasmic membrane with the concomitant transport of protons into the cell (symport system). In Shigella boydii serotype 18 (strain CDC 3083-94 / BS512), this protein is L-rhamnose-proton symporter.